The following is a 359-amino-acid chain: MNFHQVLFLLLLIFLVDLSDYGVLADKTNDGYKNATKCNIYQGRWIYDNSSNPLYGTSTCPFIGLDCQKFGRPDKNYLHYRWQPTGCDIPRFNGRDFLTRFKGKKILFVGDSLSNNMWVSLSCMLHAAVPNAKYTFQLNKGLSTFTIPEYGISVNFLKNGFLVDLVSDKTRGLILKLDSISRGNQWLGSDVAIFNTFHWWSHTGRAKTWDYFQTGDKIVKEMNRMEAFKIALTTWSKWIDHNIDPSKTRVFYQGVSPVHLNGGEWGKPGKTCLGETVPVQGPSYPGRPNEGEAIVKSVIGRMAKPVELLDVTAMTEMRKDGHPSIYAGGGDRLNDCSHWCLPGVPDAWNQLLYTALLSH.

The helical; Signal-anchor for type II membrane protein transmembrane segment at 7–25 threads the bilayer; the sequence is LFLLLLIFLVDLSDYGVLA. Positions 110–112 match the GDS motif motif; sequence GDS. Positions 335–349 match the DCXHWCLPGXXDXWN motif motif; it reads DCSHWCLPGVPDAWN.

This sequence belongs to the PC-esterase family. TBL subfamily.

Its subcellular location is the membrane. Functionally, may act as a bridging protein that binds pectin and other cell wall polysaccharides. Probably involved in maintaining esterification of pectins. May be involved in the specific O-acetylation of cell wall polymers. In Arabidopsis thaliana (Mouse-ear cress), this protein is Protein trichome birefringence-like 42 (TBL42).